The primary structure comprises 220 residues: UPF0502 protein VVA1225 (220 aa).

It belongs to the UPF0502 family.

The protein is UPF0502 protein VVA1225 of Vibrio vulnificus (strain YJ016).